Reading from the N-terminus, the 257-residue chain is MASKIGSRRWMLQLIMQLGSVLLTRCPFWGCFSQLMLYAERAEARRKPDIPVPYLYFDMGAAVLCASFMSFGVKRRWFALGAALQLAISTYAAYIGGYVHYGDWLKVRMYSRTVAIIGGFLVLASGAGELYRRKPRSRSLQSTGQVFLGIYLICVAYSLQHSKEDRLAYLNHLPGGELMIQLFFVLYGILALAFLSGYYVTLAAQILAVLLPPVMLLIDGNVAYWHNTRRVEFWNQMKLLGESVGIFGTAVILATDG.

8 consecutive transmembrane segments (helical) span residues 21–40, 52–72, 77–97, 110–130, 139–159, 182–202, 206–226, and 233–253; these read VLLTRCPFWGCFSQLMLYAE, VPYLYFDMGAAVLCASFMSFG, WFALGAALQLAISTYAAYIGG, YSRTVAIIGGFLVLASGAGEL, SLQSTGQVFLGIYLICVAYSL, LFFVLYGILALAFLSGYYVTL, ILAVLLPPVMLLIDGNVAYWH, and FWNQMKLLGESVGIFGTAVIL.

It localises to the membrane. May activate NF-kappa-B signaling pathways. This chain is Transmembrane protein 101 (TMEM101), found in Homo sapiens (Human).